A 159-amino-acid polypeptide reads, in one-letter code: MKKELKKQIVEELSKEFTNEVCVFYADFKGQTVKDLEALRKAVREAEGKARIIKNTLARIAFANNGIEAEFEENNIFIWGEDQITLAKIITKHAAANKDTFKIKGAVIEGEVKDAAYVDEVSKLPTKDELLGMVAFMMKAPVAKFAWALNKLIEKKESE.

Belongs to the universal ribosomal protein uL10 family. In terms of assembly, part of the ribosomal stalk of the 50S ribosomal subunit. The N-terminus interacts with L11 and the large rRNA to form the base of the stalk. The C-terminus forms an elongated spine to which L12 dimers bind in a sequential fashion forming a multimeric L10(L12)X complex.

Functionally, forms part of the ribosomal stalk, playing a central role in the interaction of the ribosome with GTP-bound translation factors. The sequence is that of Large ribosomal subunit protein uL10 from Nautilia profundicola (strain ATCC BAA-1463 / DSM 18972 / AmH).